Reading from the N-terminus, the 211-residue chain is Uracil phosphoribosyltransferase (211 aa).

Residues Arg-78, Arg-103, and 130 to 138 contribute to the 5-phospho-alpha-D-ribose 1-diphosphate site; that span reads DPMLATGGT. Residues Ile-196 and 201 to 203 each bind uracil; that span reads GDA. A 5-phospho-alpha-D-ribose 1-diphosphate-binding site is contributed by Asp-202.

The protein belongs to the UPRTase family. The cofactor is Mg(2+).

It carries out the reaction UMP + diphosphate = 5-phospho-alpha-D-ribose 1-diphosphate + uracil. It functions in the pathway pyrimidine metabolism; UMP biosynthesis via salvage pathway; UMP from uracil: step 1/1. Allosterically activated by GTP. Its function is as follows. Catalyzes the conversion of uracil and 5-phospho-alpha-D-ribose 1-diphosphate (PRPP) to UMP and diphosphate. The sequence is that of Uracil phosphoribosyltransferase from Beutenbergia cavernae (strain ATCC BAA-8 / DSM 12333 / CCUG 43141 / JCM 11478 / NBRC 16432 / NCIMB 13614 / HKI 0122).